We begin with the raw amino-acid sequence, 139 residues long: ATP synthase epsilon chain (139 aa).

The protein belongs to the ATPase epsilon chain family. As to quaternary structure, F-type ATPases have 2 components, CF(1) - the catalytic core - and CF(0) - the membrane proton channel. CF(1) has five subunits: alpha(3), beta(3), gamma(1), delta(1), epsilon(1). CF(0) has three main subunits: a, b and c.

It is found in the cell inner membrane. Functionally, produces ATP from ADP in the presence of a proton gradient across the membrane. This Acinetobacter baumannii (strain AB307-0294) protein is ATP synthase epsilon chain.